The chain runs to 141 residues: MVHSQLPVVALLRLLCALLLLPSATMIPGGLSPRSVTDPDVQEAAEFAVQEYNALSANAYYYKQLRIVEAQSQVVAGAKYYLTMELMKTKCAKTTGKPKVYKEIQNCELPPKAQQEKLTCRFQVWSRPWLQKIELTKMSCN.

The first 26 residues, 1–26 (MVHSQLPVVALLRLLCALLLLPSATM), serve as a signal peptide directing secretion. The Cystatin domain maps to 29–129 (GGLSPRSVTD…CRFQVWSRPW (101 aa)). The Secondary area of contact signature appears at 73–77 (QVVAG). Cystine bridges form between Cys91–Cys107 and Cys120–Cys140.

It belongs to the cystatin family. Expressed at a low level by the venom gland (at protein level).

The protein localises to the secreted. In terms of biological role, inhibits various C1 cysteine proteases including cathepsin L, papain and cathepsin B. This protein has no toxic activity and its function in the venom is unknown. It may play a role as a housekeeping or regulatory protein. The protein is Cystatin of Notechis scutatus scutatus (Mainland tiger snake).